A 324-amino-acid polypeptide reads, in one-letter code: Glyoxylate/hydroxypyruvate reductase B (324 aa).

Catalysis depends on residues R237 and E266. Catalysis depends on H285, which acts as the Proton donor.

It belongs to the D-isomer specific 2-hydroxyacid dehydrogenase family. GhrB subfamily. In terms of assembly, homodimer.

The protein localises to the cytoplasm. The catalysed reaction is glycolate + NADP(+) = glyoxylate + NADPH + H(+). It carries out the reaction (R)-glycerate + NAD(+) = 3-hydroxypyruvate + NADH + H(+). It catalyses the reaction (R)-glycerate + NADP(+) = 3-hydroxypyruvate + NADPH + H(+). Catalyzes the NADPH-dependent reduction of glyoxylate and hydroxypyruvate into glycolate and glycerate, respectively. The polypeptide is Glyoxylate/hydroxypyruvate reductase B (Salmonella choleraesuis (strain SC-B67)).